We begin with the raw amino-acid sequence, 379 residues long: Fucose-specific lectin g276 (379 aa).

Glu126 provides a ligand contact to alpha-L-fucose. Beta-L-fucose contacts are provided by Glu126, Arg163, and Trp185. Positions 185, 222, and 234 each coordinate alpha-L-fucose. Residues Trp242 and Glu282 each contribute to the beta-L-fucose site. Trp289 lines the alpha-L-fucose pocket.

The protein belongs to the fungal fucose-specific lectin family.

Functionally, lectin that specifically binds to L-fucose. Is associated with the morphogenesis of the fungus, and plays a role in the formation of the constricting rings involved in nematode-trapping. This is Fucose-specific lectin g276 from Arthrobotrys oligospora (strain ATCC 24927 / CBS 115.81 / DSM 1491) (Nematode-trapping fungus).